The primary structure comprises 427 residues: MDALTTFDHIIINANLATFSAQYGFDTYADNKDSISAAAKSTPYGQLENAAIGIKDSKIAWIGAHTQITPYLTHYQSQQITDADGHWITPGLIDCHTHIVYGGNRSNEFEARLHGANYQDIAAQGGGIVSTVRSTREANIEELFAQSEKRLLALVKEGVTSIEIKSGYGLDLKTERKMLKVARALGDKHNIHVSTTYLAAHALPPEYKDRVDDYIEQVCQWLPILHSEGLVDAVDGFCENIAFTTEQIKRVFEVARSLNLPVKLHSEQLSNIGASALVAEYQGLSSDHLEHLVEDDIKKMATSNTVAVLLPGAFYTLRDTKLPPIEELRKHQVPMAISTDCNPGTSPLTSLLLAMNMGCTLFYMTPEEVLAGATVHAAQALGLAHKGRIEVGCDADLALWDITRPADLAYQMGLNPIEGIMIKGAWR.

Fe(3+) is bound by residues His-96 and His-98. Residues His-96 and His-98 each contribute to the Zn(2+) site. 4-imidazolone-5-propanoate-binding residues include Arg-105, Tyr-168, and His-201. An N-formimidoyl-L-glutamate-binding site is contributed by Tyr-168. Fe(3+) is bound at residue His-265. His-265 provides a ligand contact to Zn(2+). Position 268 (Gln-268) interacts with 4-imidazolone-5-propanoate. Residue Asp-340 participates in Fe(3+) binding. Asp-340 contacts Zn(2+). Positions 342 and 344 each coordinate N-formimidoyl-L-glutamate. Position 345 (Thr-345) interacts with 4-imidazolone-5-propanoate.

It belongs to the metallo-dependent hydrolases superfamily. HutI family. Zn(2+) is required as a cofactor. It depends on Fe(3+) as a cofactor.

It is found in the cytoplasm. The enzyme catalyses 4-imidazolone-5-propanoate + H2O = N-formimidoyl-L-glutamate. The protein operates within amino-acid degradation; L-histidine degradation into L-glutamate; N-formimidoyl-L-glutamate from L-histidine: step 3/3. Its function is as follows. Catalyzes the hydrolytic cleavage of the carbon-nitrogen bond in imidazolone-5-propanoate to yield N-formimidoyl-L-glutamate. It is the third step in the universal histidine degradation pathway. This Psychrobacter cryohalolentis (strain ATCC BAA-1226 / DSM 17306 / VKM B-2378 / K5) protein is Imidazolonepropionase.